We begin with the raw amino-acid sequence, 249 residues long: ATP synthase subunit a (249 aa).

A run of 6 helical transmembrane segments spans residues Phe26–Leu46, Phe84–Phe104, Ile114–Phe134, Leu143–Ile163, Ile185–Ile205, and Ala208–Leu228.

Belongs to the ATPase A chain family. As to quaternary structure, F-type ATPases have 2 components, CF(1) - the catalytic core - and CF(0) - the membrane proton channel. CF(1) has five subunits: alpha(3), beta(3), gamma(1), delta(1), epsilon(1). CF(0) has three main subunits: a(1), b(2) and c(9-12). The alpha and beta chains form an alternating ring which encloses part of the gamma chain. CF(1) is attached to CF(0) by a central stalk formed by the gamma and epsilon chains, while a peripheral stalk is formed by the delta and b chains.

The protein resides in the cell inner membrane. Key component of the proton channel; it plays a direct role in the translocation of protons across the membrane. This Brucella canis (strain ATCC 23365 / NCTC 10854 / RM-666) protein is ATP synthase subunit a.